Consider the following 939-residue polypeptide: Isoleucine--tRNA ligase (939 aa).

Positions 58–68 match the 'HIGH' region motif; that stretch reads PYANGDIHIGH. Residue E574 coordinates L-isoleucyl-5'-AMP. A 'KMSKS' region motif is present at residues 615 to 619; it reads KMSKS. K618 serves as a coordination point for ATP. Zn(2+) is bound by residues C902, C905, C922, and C925.

It belongs to the class-I aminoacyl-tRNA synthetase family. IleS type 1 subfamily. In terms of assembly, monomer. It depends on Zn(2+) as a cofactor.

It is found in the cytoplasm. The catalysed reaction is tRNA(Ile) + L-isoleucine + ATP = L-isoleucyl-tRNA(Ile) + AMP + diphosphate. Its function is as follows. Catalyzes the attachment of isoleucine to tRNA(Ile). As IleRS can inadvertently accommodate and process structurally similar amino acids such as valine, to avoid such errors it has two additional distinct tRNA(Ile)-dependent editing activities. One activity is designated as 'pretransfer' editing and involves the hydrolysis of activated Val-AMP. The other activity is designated 'posttransfer' editing and involves deacylation of mischarged Val-tRNA(Ile). The chain is Isoleucine--tRNA ligase from Aromatoleum aromaticum (strain DSM 19018 / LMG 30748 / EbN1) (Azoarcus sp. (strain EbN1)).